Reading from the N-terminus, the 149-residue chain is MDPAFGNALAANVLLNICQQMQTDIHQHGFHISGNSFCRAVAWCLARLSEEFDVPDETPFIYILCHRPYLLLRAALELEVTVGNLRTLLVMVRTIMQYDTSRTATHGMYAALAAYFHRFPADFRFQFLLSEDRDWPLHIKCDLVRETTV.

This Bat coronavirus HKU9 (BtCoV) protein is Non-structural protein 7b.